A 258-amino-acid chain; its full sequence is Venom plasminogen activator (258 aa).

The first 18 residues, Met-1–Ala-18, serve as a signal peptide directing secretion. Residues Gln-19 to Leu-24 constitute a propeptide that is removed on maturation. One can recognise a Peptidase S1 domain in the interval Val-25 to Ser-249. Cystine bridges form between Cys-31/Cys-163, Cys-50/Cys-66, Cys-98/Cys-256, Cys-142/Cys-210, Cys-174/Cys-189, and Cys-200/Cys-225. Asn-44 carries N-linked (GlcNAc...) asparagine glycosylation. Residues His-65 and Asp-110 each act as charge relay system in the active site. The active-site Charge relay system is the Ser-204.

It belongs to the peptidase S1 family. Snake venom subfamily. As to quaternary structure, monomer. As to expression, expressed by the venom gland.

It is found in the secreted. Snake venom serine protease that activates plasminogen. Shows a preferential cleavage at Arg-|-Xaa instead of Lys-|-Xaa bonds. The protein is Venom plasminogen activator of Agkistrodon piscivorus leucostoma (Western cottonmouth).